A 300-amino-acid chain; its full sequence is Protoheme IX farnesyltransferase (300 aa).

The next 9 membrane-spanning stretches (helical) occupy residues 20–40 (ITKAGLAISVLFSSIAGYLLG), 49–69 (WSVLIVLAIGGYCMVGASNAY), 97–117 (VTALIVASLLTIIGIVLLYTI), 122–142 (AMFAAISIFLYTSIYTPLKTV), 145–165 (LSVFVGAFPGAIPFMLGWVAA), 176–196 (LFLIQFFWQFPHFWSIGWFLY), 217–237 (ALQVILYTIWLIIASLLPVLG), 242–262 (LFISPVAAVLVFLLGLWMLFY), and 278–298 (LMLVSVSYISLLQIVFIVDKF).

This sequence belongs to the UbiA prenyltransferase family. Protoheme IX farnesyltransferase subfamily.

It is found in the cell inner membrane. The enzyme catalyses heme b + (2E,6E)-farnesyl diphosphate + H2O = Fe(II)-heme o + diphosphate. It functions in the pathway porphyrin-containing compound metabolism; heme O biosynthesis; heme O from protoheme: step 1/1. Converts heme B (protoheme IX) to heme O by substitution of the vinyl group on carbon 2 of heme B porphyrin ring with a hydroxyethyl farnesyl side group. In Flavobacterium johnsoniae (strain ATCC 17061 / DSM 2064 / JCM 8514 / BCRC 14874 / CCUG 350202 / NBRC 14942 / NCIMB 11054 / UW101) (Cytophaga johnsonae), this protein is Protoheme IX farnesyltransferase.